The following is a 319-amino-acid chain: ATP-dependent 6-phosphofructokinase (319 aa).

Residues G10, 71 to 72, and 101 to 104 contribute to the ATP site; these read RS and GDGS. D102 is a Mg(2+) binding site. Residue 125–127 participates in substrate binding; the sequence is TID. The active-site Proton acceptor is D127. Residue R154 participates in ADP binding. Residues R162 and 169 to 171 each bind substrate; that span reads MGR. Position 185 to 187 (185 to 187) interacts with ADP; that stretch reads GAE. Residues E223, R244, and 250 to 253 each bind substrate; that span reads HVQR.

The protein belongs to the phosphofructokinase type A (PFKA) family. ATP-dependent PFK group I subfamily. Prokaryotic clade 'B1' sub-subfamily. In terms of assembly, homotetramer. Mg(2+) is required as a cofactor.

It is found in the cytoplasm. It carries out the reaction beta-D-fructose 6-phosphate + ATP = beta-D-fructose 1,6-bisphosphate + ADP + H(+). The protein operates within carbohydrate degradation; glycolysis; D-glyceraldehyde 3-phosphate and glycerone phosphate from D-glucose: step 3/4. With respect to regulation, allosterically activated by ADP and other diphosphonucleosides, and allosterically inhibited by phosphoenolpyruvate. Functionally, catalyzes the phosphorylation of D-fructose 6-phosphate to fructose 1,6-bisphosphate by ATP, the first committing step of glycolysis. In Wolinella succinogenes (strain ATCC 29543 / DSM 1740 / CCUG 13145 / JCM 31913 / LMG 7466 / NCTC 11488 / FDC 602W) (Vibrio succinogenes), this protein is ATP-dependent 6-phosphofructokinase.